The primary structure comprises 233 residues: Putative T-box protein 41 (233 aa).

The segment at residues 1–146 is a DNA-binding region (T-box); it reads MTVTRNGCRI…MNPHARHFLK (146 aa).

Its subcellular location is the nucleus. The polypeptide is Putative T-box protein 41 (tbx-41) (Caenorhabditis elegans).